A 427-amino-acid polypeptide reads, in one-letter code: Enolase (427 aa).

Q163 contacts (2R)-2-phosphoglycerate. E205 serves as the catalytic Proton donor. 3 residues coordinate Mg(2+): D242, E285, and D312. (2R)-2-phosphoglycerate is bound by residues K337, R366, S367, and K388. The active-site Proton acceptor is K337.

The protein belongs to the enolase family. Mg(2+) is required as a cofactor.

The protein localises to the cytoplasm. It is found in the secreted. It localises to the cell surface. It carries out the reaction (2R)-2-phosphoglycerate = phosphoenolpyruvate + H2O. It participates in carbohydrate degradation; glycolysis; pyruvate from D-glyceraldehyde 3-phosphate: step 4/5. Functionally, catalyzes the reversible conversion of 2-phosphoglycerate (2-PG) into phosphoenolpyruvate (PEP). It is essential for the degradation of carbohydrates via glycolysis. This Nitrosospira multiformis (strain ATCC 25196 / NCIMB 11849 / C 71) protein is Enolase.